A 160-amino-acid polypeptide reads, in one-letter code: Putative pre-16S rRNA nuclease (160 aa).

Belongs to the YqgF nuclease family.

The protein localises to the cytoplasm. Functionally, could be a nuclease involved in processing of the 5'-end of pre-16S rRNA. In Cereibacter sphaeroides (strain ATCC 17029 / ATH 2.4.9) (Rhodobacter sphaeroides), this protein is Putative pre-16S rRNA nuclease.